We begin with the raw amino-acid sequence, 303 residues long: Probable cell division protein WhiA (303 aa).

Residues 272-303 (SIQQLADSLSTPLTKSGVNHRLRKINKIADEL) constitute a DNA-binding region (H-T-H motif).

Belongs to the WhiA family.

Functionally, involved in cell division and chromosome segregation. The chain is Probable cell division protein WhiA from Streptococcus pneumoniae serotype 2 (strain D39 / NCTC 7466).